We begin with the raw amino-acid sequence, 172 residues long: 16S rRNA aminocarboxypropyltransferase (172 aa).

4 residues coordinate S-adenosyl-L-methionine: threonine 21, leucine 71, leucine 93, and threonine 112.

It belongs to the TDD superfamily. TSR3 family.

It localises to the cytoplasm. The enzyme catalyses an N(1)-methylpseudouridine in rRNA + S-adenosyl-L-methionine = N(1)-methyl-N(3)-[(3S)-3-amino-3-carboxypropyl]pseudouridine in rRNA + S-methyl-5'-thioadenosine + H(+). Its function is as follows. Aminocarboxypropyltransferase that catalyzes the aminocarboxypropyl transfer on pseudouridine at position 914 in 16S rRNA. It constitutes the last step in biosynthesis of the hypermodified N1-methyl-N3-(3-amino-3-carboxypropyl) pseudouridine (m1acp3-Psi). This is 16S rRNA aminocarboxypropyltransferase from Methanocaldococcus jannaschii (strain ATCC 43067 / DSM 2661 / JAL-1 / JCM 10045 / NBRC 100440) (Methanococcus jannaschii).